A 248-amino-acid polypeptide reads, in one-letter code: Oligo(A)/oligo(T)-binding protein (248 aa).

The DNA-binding element occupies 1–36 (MAKTLAQGRKPGSGRKPGKGKTLREGRKPGSGRRRR). Disordered stretches follow at residues 1–127 (MAKT…LQQQ) and 219–248 (TAASNQPRTQPSPAAHITKNSDSTEKNATI). 3 repeat units span residues 8–12 (GRKPG), 14–18 (GRKPG), and 26–30 (GRKPG). Residues 8–30 (GRKPGSGRKPGKGKTLREGRKPG) are 3 X 5 AA repeats of G-R-K-P-G. A compositionally biased stretch (basic residues) spans 12-21 (GSGRKPGKGK). Residues 37-71 (QDTGGKETDGSQQDQESRLISSRDMEAVDALRELT) are compositionally biased toward basic and acidic residues. Low complexity-rich tracts occupy residues 72–100 (HSPSSHSAHNSSAAPPPHAAAASTSLPPS) and 111–127 (QQQQQQQQQQQQLLQQQ).

As to quaternary structure, binds as a dimer or higher oligomer.

Functionally, DNA-binding protein that recognizes oligo(A).oligo(T) tracts (A.T DNA). Can bind to any 11 bp sequence in which 10 bases conform to an uninterrupted oligo(A).oligo(T) tract. The sequence is that of Oligo(A)/oligo(T)-binding protein (DAT1) from Saccharomyces cerevisiae (strain ATCC 204508 / S288c) (Baker's yeast).